The sequence spans 291 residues: Energy-coupling factor transporter ATP-binding protein EcfA2 (291 aa).

The region spanning 3–246 (ITFKDVSYTY…PEWLTSKQLG (244 aa)) is the ABC transporter domain. 40-47 (GHTGSGKS) is a binding site for ATP.

This sequence belongs to the ABC transporter superfamily. Energy-coupling factor EcfA family. As to quaternary structure, forms a stable energy-coupling factor (ECF) transporter complex composed of 2 membrane-embedded substrate-binding proteins (S component), 2 ATP-binding proteins (A component) and 2 transmembrane proteins (T component).

It is found in the cell membrane. ATP-binding (A) component of a common energy-coupling factor (ECF) ABC-transporter complex. Unlike classic ABC transporters this ECF transporter provides the energy necessary to transport a number of different substrates. The polypeptide is Energy-coupling factor transporter ATP-binding protein EcfA2 (Latilactobacillus sakei subsp. sakei (strain 23K) (Lactobacillus sakei subsp. sakei)).